The following is a 263-amino-acid chain: Kallikrein 1-related peptidase b27 (263 aa).

The first 17 residues, 1-17 (MRFLILFLALSLGGIDA), serve as a signal peptide directing secretion. A propeptide spans 18 to 24 (APPVQSR) (activation peptide). In terms of domain architecture, Peptidase S1 spans 25–260 (IIGGFKCKKN…FTSWIKDTMA (236 aa)). 5 disulfides stabilise this stretch: Cys-31–Cys-175, Cys-50–Cys-66, Cys-154–Cys-221, Cys-186–Cys-200, and Cys-211–Cys-236. Residue His-65 is the Charge relay system of the active site. N-linked (GlcNAc...) asparagine glycans are attached at residues Asn-69 and Asn-105. The active-site Charge relay system is Asp-122. The active-site Charge relay system is the Ser-215.

This sequence belongs to the peptidase S1 family. Kallikrein subfamily. Expressed in testis and submaxillary gland. Not expressed in heart, brain, spleen, lung, liver, muscle, kidney and ovary. In the testis, expression localized specifically to Leydig cells in the interstitial tissues.

Its activity is regulated as follows. Strongly inhibited by protease inhibitors diisopropyl fluorophosphate, phenylmethanesulfonyl fluoride and SBTI. In terms of biological role, serine protease with chymotrypsin-like cleavage specificity. Shows activity towards casein, gelatin, IGFBP3 and fibronectin but not towards laminin or collagens I and IV. Does not hydrolyze kininogin to release Lys-bradykinin. The polypeptide is Kallikrein 1-related peptidase b27 (Klk1b27) (Mus musculus (Mouse)).